We begin with the raw amino-acid sequence, 313 residues long: Aspartate carbamoyltransferase catalytic subunit (313 aa).

The carbamoyl phosphate site is built by Arg-54 and Thr-55. Lys-82 lines the L-aspartate pocket. Residues Arg-104, His-132, and Gln-135 each contribute to the carbamoyl phosphate site. Positions 165 and 219 each coordinate L-aspartate. Residues Gly-260 and Pro-261 each contribute to the carbamoyl phosphate site.

It belongs to the aspartate/ornithine carbamoyltransferase superfamily. ATCase family. Heterododecamer (2C3:3R2) of six catalytic PyrB chains organized as two trimers (C3), and six regulatory PyrI chains organized as three dimers (R2).

The enzyme catalyses carbamoyl phosphate + L-aspartate = N-carbamoyl-L-aspartate + phosphate + H(+). It functions in the pathway pyrimidine metabolism; UMP biosynthesis via de novo pathway; (S)-dihydroorotate from bicarbonate: step 2/3. Functionally, catalyzes the condensation of carbamoyl phosphate and aspartate to form carbamoyl aspartate and inorganic phosphate, the committed step in the de novo pyrimidine nucleotide biosynthesis pathway. In Thermobifida fusca (strain YX), this protein is Aspartate carbamoyltransferase catalytic subunit.